Reading from the N-terminus, the 596-residue chain is Phosphomethylpyrimidine synthase 1 (596 aa).

Substrate contacts are provided by residues N228, M257, Y286, H322, 342–344 (SRG), 383–386 (DGLR), and E422. A Zn(2+)-binding site is contributed by H426. Y449 lines the substrate pocket. H490 serves as a coordination point for Zn(2+). [4Fe-4S] cluster is bound by residues C570, C573, and C578.

This sequence belongs to the ThiC family. As to quaternary structure, homodimer. [4Fe-4S] cluster serves as cofactor.

The enzyme catalyses 5-amino-1-(5-phospho-beta-D-ribosyl)imidazole + S-adenosyl-L-methionine = 4-amino-2-methyl-5-(phosphooxymethyl)pyrimidine + CO + 5'-deoxyadenosine + formate + L-methionine + 3 H(+). It functions in the pathway cofactor biosynthesis; thiamine diphosphate biosynthesis. In terms of biological role, catalyzes the synthesis of the hydroxymethylpyrimidine phosphate (HMP-P) moiety of thiamine from aminoimidazole ribotide (AIR) in a radical S-adenosyl-L-methionine (SAM)-dependent reaction. In Syntrophotalea carbinolica (strain DSM 2380 / NBRC 103641 / GraBd1) (Pelobacter carbinolicus), this protein is Phosphomethylpyrimidine synthase 1.